The following is a 389-amino-acid chain: S-adenosylmethionine synthase (389 aa).

ATP is bound at residue His-15. Asp-17 contributes to the Mg(2+) binding site. A K(+)-binding site is contributed by Glu-43. L-methionine contacts are provided by Glu-56 and Gln-99. Residues 99–109 form a flexible loop region; that stretch reads QSPDIAQGVNE. Residues 166-168, 234-235, Asp-243, 249-250, Ala-266, and Lys-270 contribute to the ATP site; these read DAK, RF, and RK. Asp-243 serves as a coordination point for L-methionine. Lys-274 lines the L-methionine pocket.

This sequence belongs to the AdoMet synthase family. As to quaternary structure, homotetramer; dimer of dimers. Requires Mg(2+) as cofactor. K(+) is required as a cofactor.

Its subcellular location is the cytoplasm. It catalyses the reaction L-methionine + ATP + H2O = S-adenosyl-L-methionine + phosphate + diphosphate. Its pathway is amino-acid biosynthesis; S-adenosyl-L-methionine biosynthesis; S-adenosyl-L-methionine from L-methionine: step 1/1. In terms of biological role, catalyzes the formation of S-adenosylmethionine (AdoMet) from methionine and ATP. The overall synthetic reaction is composed of two sequential steps, AdoMet formation and the subsequent tripolyphosphate hydrolysis which occurs prior to release of AdoMet from the enzyme. The polypeptide is S-adenosylmethionine synthase (Neisseria meningitidis serogroup A / serotype 4A (strain DSM 15465 / Z2491)).